The primary structure comprises 195 residues: Small ribosomal subunit protein uS10c (195 aa).

Residues 1–59 constitute a chloroplast transit peptide; the sequence is MATSSISAALLSPLTLRNASSSSTKQDFSTLSSLNLRRTLTPTLQSGHTLSNSSNFATF.

Belongs to the universal ribosomal protein uS10 family. In terms of assembly, component of the chloroplast small ribosomal subunit (SSU). Mature 70S chloroplast ribosomes of higher plants consist of a small (30S) and a large (50S) subunit. The 30S small subunit contains 1 molecule of ribosomal RNA (16S rRNA) and 24 different proteins. The 50S large subunit contains 3 rRNA molecules (23S, 5S and 4.5S rRNA) and 33 different proteins.

It is found in the plastid. It localises to the chloroplast. In terms of biological role, component of the chloroplast ribosome (chloro-ribosome), a dedicated translation machinery responsible for the synthesis of chloroplast genome-encoded proteins, including proteins of the transcription and translation machinery and components of the photosynthetic apparatus. This is Small ribosomal subunit protein uS10c (RPS10) from Spinacia oleracea (Spinach).